We begin with the raw amino-acid sequence, 164 residues long: General odorant-binding protein 1 (164 aa).

The signal sequence occupies residues 1-19 (MPGVLRALLLLAAAAPLLA). 3 disulfides stabilise this stretch: C38–C73, C69–C127, and C116–C136.

Belongs to the PBP/GOBP family. Antenna.

Its function is as follows. Present in the aqueous fluid surrounding olfactory sensory dendrites and are thought to aid in the capture and transport of hydrophobic odorants into and through this fluid. The protein is General odorant-binding protein 1 of Heliothis virescens (Tobacco budworm moth).